A 469-amino-acid chain; its full sequence is RNA-editing ligase 1, mitochondrial (469 aa).

A mitochondrion-targeting transit peptide spans 1–44; sequence MQLQRLGAPLLKRLVGGCIRQSTAPIMPCVVVSGSGVFLTPVRT. ATP is bound by residues 59-61, 86-92, arginine 111, glutamate 159, phenylalanine 209, and 307-309; these read IEI, EKVHGTN, and KLR. The active-site N6-AMP-lysine intermediate is lysine 87. The disordered stretch occupies residues 450-469; that stretch reads AAAQSEAIPPLSPAAPTKGE.

Belongs to the RNA ligase 2 family. As to quaternary structure, component of the RNA editing complex (editosome), a 1600 kDa complex composed of at least 20 proteins. Interacts with terminal uridylyltransferase MEAT1.

The protein resides in the mitochondrion. The enzyme catalyses ATP + (ribonucleotide)n-3'-hydroxyl + 5'-phospho-(ribonucleotide)m = (ribonucleotide)n+m + AMP + diphosphate.. Essential for RNA editing. RNA editing in kinetoplastid mitochondria inserts and deletes uridylates at multiple sites in pre-mRNAs as directed by guide RNAs. The protein is RNA-editing ligase 1, mitochondrial (REL1) of Trypanosoma brucei brucei.